The primary structure comprises 492 residues: Probable cytochrome P450 313a1 (492 aa).

Cys438 contacts heme.

The protein belongs to the cytochrome P450 family. Heme is required as a cofactor.

The protein resides in the endoplasmic reticulum membrane. It is found in the microsome membrane. In terms of biological role, may be involved in the metabolism of insect hormones and in the breakdown of synthetic insecticides. In Drosophila melanogaster (Fruit fly), this protein is Probable cytochrome P450 313a1 (Cyp313a1).